The sequence spans 139 residues: Peptide methionine sulfoxide reductase MsrB (139 aa).

Residues 17 to 139 form the MsrB domain; it reads EEQWRRELSP…NSAALKLEPK (123 aa). Zn(2+) is bound by residues cysteine 56, cysteine 59, cysteine 105, and cysteine 108. Catalysis depends on cysteine 128, which acts as the Nucleophile.

It belongs to the MsrB Met sulfoxide reductase family. Requires Zn(2+) as cofactor.

It catalyses the reaction L-methionyl-[protein] + [thioredoxin]-disulfide + H2O = L-methionyl-(R)-S-oxide-[protein] + [thioredoxin]-dithiol. In Bradyrhizobium diazoefficiens (strain JCM 10833 / BCRC 13528 / IAM 13628 / NBRC 14792 / USDA 110), this protein is Peptide methionine sulfoxide reductase MsrB.